The following is a 451-amino-acid chain: Mannan endo-1,6-alpha-mannosidase DCW1 (451 aa).

The signal sequence occupies residues 1 to 21; that stretch reads MLAVTFTAAAVLSLLAASGRT. Asn84, Asn109, Asn203, Asn242, Asn267, and Asn291 each carry an N-linked (GlcNAc...) asparagine glycan. Positions 397 to 419 are disordered; sequence AMNGGTSPGDPAAGTKTKAENLP. The GPI-anchor amidated aspartate moiety is linked to residue Asp427. Residues 428–451 constitute a propeptide, removed in mature form; the sequence is RAGAGIITALIGSSFLACTLWLII.

The protein belongs to the glycosyl hydrolase 76 family.

The protein localises to the secreted. It is found in the cell wall. Its subcellular location is the cell membrane. The catalysed reaction is Random hydrolysis of (1-&gt;6)-alpha-D-mannosidic linkages in unbranched (1-&gt;6)-mannans.. Functionally, required for normal synthesis of the cell wall. This chain is Mannan endo-1,6-alpha-mannosidase DCW1 (DCW1), found in Eremothecium gossypii (strain ATCC 10895 / CBS 109.51 / FGSC 9923 / NRRL Y-1056) (Yeast).